The following is a 370-amino-acid chain: Leucine-rich repeat-containing protein 19 (370 aa).

The first 24 residues, 1-24, serve as a signal peptide directing secretion; that stretch reads MKVTGITILFWPLSMILLSDKIQS. At 25-270 the chain is on the extracellular side; it reads SKREVQCNFT…SEHEPLGKSW (246 aa). Residues Asn-32, Asn-37, Asn-62, and Asn-95 are each glycosylated (N-linked (GlcNAc...) asparagine). LRR repeat units lie at residues 46-71, 72-95, 96-119, 120-143, and 145-168; these read KKDV…VLQT, YFLL…GFGN, LSSL…AFLG, LNKL…VFVP, and RSLK…LFHL. An LRRCT domain is found at 176–227; it reads NLWNCSCSLFNLQNWLNTSNVTLENENITMCSYPNSLQSYNIKTVPHKAECH. Residues Asn-179, Asn-192, Asn-195, Asn-202, Asn-251, and Asn-256 are each glycosylated (N-linked (GlcNAc...) asparagine). Residues 271-291 form a helical membrane-spanning segment; sequence AFLVGVVVTVLTTSLLIFIAI. Topologically, residues 292–370 are cytoplasmic; that stretch reads KCPIWYNILL…IDIHELCEEN (79 aa).

In terms of assembly, interacts with TRAF2 and TRAF6. In terms of tissue distribution, expressed in renal collecting duct epithelial cells.

It localises to the membrane. With respect to regulation, activated by TLR ligands such as LPS, bacterial DNA and peptidoglycan. Pathogen-recognition receptor which mediates the activation of TRAF2- and TRAF6 NF-kappa-B signaling pathways and induces the expression of pro-inflammatory cytokines. In kidney, prevents infection by uropathogenic bacteria by inducing the production of cytokines, chemokines and antimicrobial substances. In gut, involved in host-microbiota interactions, plays a critical role in promoting the recruitment of immune cells and intestinal inflammation. The protein is Leucine-rich repeat-containing protein 19 of Homo sapiens (Human).